A 274-amino-acid chain; its full sequence is Kit ligand (274 aa).

The N-terminal stretch at 1-25 (MKKTQTWIITCIYLQLLLFNPLVHS) is a signal peptide. Position 26 is a pyrrolidone carboxylic acid (glutamine 26). At 26–215 (QGICRNRVTD…SNSIEDSSLQ (190 aa)) the chain is on the extracellular side. Intrachain disulfides connect cysteine 29–cysteine 114 and cysteine 68–cysteine 164. Asparagine 90, asparagine 97, asparagine 145, and asparagine 196 each carry an N-linked (GlcNAc...) asparagine glycan. Residues 216–238 (WAAVALPAFFSLVIGFAFGALYW) traverse the membrane as a helical segment. At 239–274 (KKKQPNLTRTVENRQINEEDNEISMLQEKEREFQEV) the chain is on the cytoplasmic side.

This sequence belongs to the SCF family. In terms of assembly, homodimer, non-covalently linked. In terms of processing, a soluble form is produced by proteolytic processing of the extracellular domain.

The protein resides in the cytoplasm. Its subcellular location is the cytoskeleton. The protein localises to the cell membrane. It is found in the cell projection. It localises to the lamellipodium. The protein resides in the filopodium. Its subcellular location is the secreted. Functionally, stimulates the proliferation of mast cells. Able to augment the proliferation of both myeloid and lymphoid hematopoietic progenitors in bone marrow culture. Also mediates cell-cell adhesion. Acts synergistically with other cytokines, probably interleukins. The protein is Kit ligand (KITLG) of Capra hircus (Goat).